A 292-amino-acid polypeptide reads, in one-letter code: Bifunctional protein FolD 2 (292 aa).

Residues 166-168 and Ile-232 contribute to the NADP(+) site; that span reads GHS.

It belongs to the tetrahydrofolate dehydrogenase/cyclohydrolase family. Homodimer.

It catalyses the reaction (6R)-5,10-methylene-5,6,7,8-tetrahydrofolate + NADP(+) = (6R)-5,10-methenyltetrahydrofolate + NADPH. It carries out the reaction (6R)-5,10-methenyltetrahydrofolate + H2O = (6R)-10-formyltetrahydrofolate + H(+). It functions in the pathway one-carbon metabolism; tetrahydrofolate interconversion. Functionally, catalyzes the oxidation of 5,10-methylenetetrahydrofolate to 5,10-methenyltetrahydrofolate and then the hydrolysis of 5,10-methenyltetrahydrofolate to 10-formyltetrahydrofolate. This chain is Bifunctional protein FolD 2, found in Ruegeria pomeroyi (strain ATCC 700808 / DSM 15171 / DSS-3) (Silicibacter pomeroyi).